The following is a 199-amino-acid chain: Recombination protein RecR (199 aa).

Residues 58-73 (CKKCFNLTSEEECDIC) form a C4-type zinc finger. One can recognise a Toprim domain in the interval 81 to 175 (NIICVVAETK…KVTRIAYGLP (95 aa)).

It belongs to the RecR family.

May play a role in DNA repair. It seems to be involved in an RecBC-independent recombinational process of DNA repair. It may act with RecF and RecO. The sequence is that of Recombination protein RecR from Prochlorococcus marinus (strain MIT 9515).